The chain runs to 369 residues: C-C chemokine receptor type 9 (369 aa).

At 1-48 the chain is on the extracellular side; the sequence is MTPTDFTSPIPNMADDYGSESTSSMEDYVNFNFTDFYCEKNNVRQFAS. N-linked (GlcNAc...) asparagine glycosylation is present at N32. Disulfide bonds link C38–C289 and C119–C198. The helical transmembrane segment at 49-74 threads the bilayer; the sequence is HFLPPLYWLVFIVGALGNSLVILVYW. Topologically, residues 75 to 85 are cytoplasmic; it reads YCTRVKTMTDM. Residues 86 to 109 traverse the membrane as a helical segment; that stretch reads FLLNLAIADLLFLVTLPFWAIAAA. Over 110 to 120 the chain is Extracellular; it reads DQWKFQTFMCK. A helical membrane pass occupies residues 121-150; that stretch reads VVNSMYKMNFYSCVLLIMCISVDRYIAIAQ. The Cytoplasmic segment spans residues 151–159; sequence AMRAHTWRE. Residues 160 to 185 form a helical membrane-spanning segment; that stretch reads KRLLYSKMVCFTIWVLAAALCIPEIL. Residues 186–208 are Extracellular-facing; sequence YSQIKEESGIAICTMVYPSDEST. Residues 209 to 243 form a helical membrane-spanning segment; that stretch reads KLKSAVLTLKVILGFFLPFVVMACCYTIIIHTLIQ. The Cytoplasmic segment spans residues 244-248; the sequence is AKKSS. The helical transmembrane segment at 249 to 283 threads the bilayer; that stretch reads KHKALKVTITVLTVFVLSQFPYNCILLVQTIDAYA. The Extracellular segment spans residues 284–290; the sequence is MFISNCA. The chain crosses the membrane as a helical span at residues 291–321; sequence VSTNIDICFQVTQTIAFFHSCLNPVLYVFVG. At 322–369 the chain is on the cytoplasmic side; sequence ERFRRDLVKTLKNLGCISQAQWVSFTRREGSLKLSSMLLETTSGALSL.

Belongs to the G-protein coupled receptor 1 family. As to expression, highly expressed in the thymus and low in lymph nodes and spleen.

Its subcellular location is the cell membrane. Functionally, receptor for chemokine SCYA25/TECK. Subsequently transduces a signal by increasing the intracellular calcium ions level. Its function is as follows. (Microbial infection) Alternative coreceptor with CD4 for HIV-1 infection. This chain is C-C chemokine receptor type 9 (CCR9), found in Homo sapiens (Human).